The chain runs to 267 residues: MSLGIGIIGAGGRMGRMLIEVVHRQPGVHVAAATDRTGGEAVGRDAGELAGQGSLGVPIGDDIPAAVAASDAVIDFSLPEATETVAAACAEAGRPLVLGTTGLGETQREAVHRLAEQVAVMHAANYSTGVTLLTALVEQAARAIGVYSDIEIIEAHHRHKVDAPSGTALRLGEAVADALGRDLSQCAVYGREGHTGERDPQTIGFETIRAGDIVGDHTVLFGGDGERVELTHKASSRTTFASGAVRAAAWVVEQPPGLYDMRDMIGV.

NAD(+)-binding positions include Gly-9 to Met-14 and Asp-35. Arg-36 is a binding site for NADP(+). NAD(+) is bound by residues Gly-99–Thr-101 and Ala-123–Tyr-126. Residue His-156 is the Proton donor/acceptor of the active site. His-157 is a (S)-2,3,4,5-tetrahydrodipicolinate binding site. Lys-160 functions as the Proton donor in the catalytic mechanism. Gly-166–Thr-167 lines the (S)-2,3,4,5-tetrahydrodipicolinate pocket.

The protein belongs to the DapB family.

The protein resides in the cytoplasm. The enzyme catalyses (S)-2,3,4,5-tetrahydrodipicolinate + NAD(+) + H2O = (2S,4S)-4-hydroxy-2,3,4,5-tetrahydrodipicolinate + NADH + H(+). It carries out the reaction (S)-2,3,4,5-tetrahydrodipicolinate + NADP(+) + H2O = (2S,4S)-4-hydroxy-2,3,4,5-tetrahydrodipicolinate + NADPH + H(+). Its pathway is amino-acid biosynthesis; L-lysine biosynthesis via DAP pathway; (S)-tetrahydrodipicolinate from L-aspartate: step 4/4. Functionally, catalyzes the conversion of 4-hydroxy-tetrahydrodipicolinate (HTPA) to tetrahydrodipicolinate. The chain is 4-hydroxy-tetrahydrodipicolinate reductase from Halorhodospira halophila (strain DSM 244 / SL1) (Ectothiorhodospira halophila (strain DSM 244 / SL1)).